The sequence spans 308 residues: Ribosome maturation factor RimP (308 aa).

Disordered stretches follow at residues 1 to 31, 94 to 113, and 249 to 308; these read MARA…AADA, EDIG…AAGG, and DLDE…EMNR. Residues 17–31 are compositionally biased toward low complexity; the sequence is APSRRTGGARAAADA. Residues 99–113 are compositionally biased toward gly residues; it reads DGAGGTGGSGGAAGG. The span at 249-269 shows a compositional bias: acidic residues; sequence DLDEGLEDDDGLEDEDDEDEY.

It belongs to the RimP family.

It is found in the cytoplasm. In terms of biological role, required for maturation of 30S ribosomal subunits. This is Ribosome maturation factor RimP from Parafrankia sp. (strain EAN1pec).